The sequence spans 344 residues: Tripartite motif-containing protein 44 (344 aa).

The interval 69–165 (PPASGDDALP…ETEAESEFDP (97 aa)) is disordered. Residues 88 to 165 (EGEVESEVGE…ETEAESEFDP (78 aa)) are compositionally biased toward acidic residues. A B box-type zinc finger spans residues 174–215 (VAKRKCPDHGLDLSTYCQEDRQLICVLCPVIGAHRGHQLSTL). The Zn(2+) site is built by Cys179, His182, Cys201, and His207. Residues 290–325 (AHVTEILADIQSHMDRLMTQMAQAKEQLDTSNESAE) are a coiled coil. Positions 309–344 (QMAQAKEQLDTSNESAEPKAEGDEEGPSGASEEEDT) are disordered. The span at 330–344 (GDEEGPSGASEEEDT) shows a compositional bias: acidic residues. A phosphoserine mark is found at Ser336 and Ser339.

In terms of assembly, interacts (via coiled coil) with TRIM17 (via coiled coil).

Its function is as follows. May play a role in the process of differentiation and maturation of neuronal cells. May regulate the activity of TRIM17. Is a negative regulator of PAX6 expression. The protein is Tripartite motif-containing protein 44 (Trim44) of Rattus norvegicus (Rat).